Consider the following 171-residue polypeptide: 3-hydroxydecanoyl-[acyl-carrier-protein] dehydratase (171 aa).

The active site involves His-70.

Belongs to the thioester dehydratase family. FabA subfamily. In terms of assembly, homodimer.

Its subcellular location is the cytoplasm. The enzyme catalyses a (3R)-hydroxyacyl-[ACP] = a (2E)-enoyl-[ACP] + H2O. The catalysed reaction is (3R)-hydroxydecanoyl-[ACP] = (2E)-decenoyl-[ACP] + H2O. It carries out the reaction (2E)-decenoyl-[ACP] = (3Z)-decenoyl-[ACP]. Its pathway is lipid metabolism; fatty acid biosynthesis. Functionally, necessary for the introduction of cis unsaturation into fatty acids. Catalyzes the dehydration of (3R)-3-hydroxydecanoyl-ACP to E-(2)-decenoyl-ACP and then its isomerization to Z-(3)-decenoyl-ACP. Can catalyze the dehydratase reaction for beta-hydroxyacyl-ACPs with saturated chain lengths up to 16:0, being most active on intermediate chain length. The protein is 3-hydroxydecanoyl-[acyl-carrier-protein] dehydratase of Pseudomonas putida (strain ATCC 700007 / DSM 6899 / JCM 31910 / BCRC 17059 / LMG 24140 / F1).